A 384-amino-acid polypeptide reads, in one-letter code: MTGIPPPSRFPEQPIPPWRRAVLKVGSSLLAADGGGLSPRFALDLAHFVSANITAGRQLVIVSSGAVAAGRALIPPLPESGGALAARQALAALGQAQLIALWQRFFDRPVAQVLLTHDDLRNRRRYLNARATLRELLHLGTLPVVNENDTVSVDELKLGDNDNLAAIVAALIDAQALFIATDIDGLYTTDPRHHSDAQPLHEVRTLTPENLAMAGDSSSTVGTGGMRTKLEAALKAGAAGIDTYLFNGRSSDVVRGLAQHRLRGTRIHPTCTPIAARKYWLRHAPVEPGAILIDAGAAAALAQQGASLLPGGVLSAEGDFRRGDMIQIATRSPDHPSHPLARGLVQYSAADVRRIAGCHSRDIQTLLGYTYGDTIVHRDDLVLL.

Lysine 24 contributes to the ATP binding site. Residues serine 64, aspartate 149, and asparagine 161 each coordinate substrate. ATP is bound by residues 181–182 and 223–229; these read TD and TGGMRTK. A PUA domain is found at 288 to 370; that stretch reads PGAILIDAGA…RDIQTLLGYT (83 aa).

The protein belongs to the glutamate 5-kinase family.

The protein resides in the cytoplasm. It catalyses the reaction L-glutamate + ATP = L-glutamyl 5-phosphate + ADP. It functions in the pathway amino-acid biosynthesis; L-proline biosynthesis; L-glutamate 5-semialdehyde from L-glutamate: step 1/2. Functionally, catalyzes the transfer of a phosphate group to glutamate to form L-glutamate 5-phosphate. The chain is Glutamate 5-kinase from Xylella fastidiosa (strain M23).